The following is a 436-amino-acid chain: GTPase Der (436 aa).

EngA-type G domains are found at residues P3–S168 and I177–S352. Residues G9–S16, D56–Y60, N120–E123, G183–S190, D230–L234, and N295–D298 each bind GTP. Residues Q353–K436 enclose the KH-like domain.

This sequence belongs to the TRAFAC class TrmE-Era-EngA-EngB-Septin-like GTPase superfamily. EngA (Der) GTPase family. Associates with the 50S ribosomal subunit.

In terms of biological role, GTPase that plays an essential role in the late steps of ribosome biogenesis. In Prosthecochloris aestuarii (strain DSM 271 / SK 413), this protein is GTPase Der.